A 196-amino-acid chain; its full sequence is Imidazoleglycerol-phosphate dehydratase (196 aa).

It belongs to the imidazoleglycerol-phosphate dehydratase family.

It localises to the cytoplasm. It catalyses the reaction D-erythro-1-(imidazol-4-yl)glycerol 3-phosphate = 3-(imidazol-4-yl)-2-oxopropyl phosphate + H2O. It functions in the pathway amino-acid biosynthesis; L-histidine biosynthesis; L-histidine from 5-phospho-alpha-D-ribose 1-diphosphate: step 6/9. This chain is Imidazoleglycerol-phosphate dehydratase, found in Halobacterium salinarum (strain ATCC 700922 / JCM 11081 / NRC-1) (Halobacterium halobium).